A 169-amino-acid polypeptide reads, in one-letter code: Peptide deformylase (169 aa).

Fe cation is bound by residues cysteine 91 and histidine 133. Residue glutamate 134 is part of the active site. Histidine 137 is a Fe cation binding site.

It belongs to the polypeptide deformylase family. Fe(2+) is required as a cofactor.

The catalysed reaction is N-terminal N-formyl-L-methionyl-[peptide] + H2O = N-terminal L-methionyl-[peptide] + formate. Its function is as follows. Removes the formyl group from the N-terminal Met of newly synthesized proteins. Requires at least a dipeptide for an efficient rate of reaction. N-terminal L-methionine is a prerequisite for activity but the enzyme has broad specificity at other positions. This is Peptide deformylase from Escherichia coli (strain K12 / DH10B).